The primary structure comprises 502 residues: Lanosterol 14-alpha demethylase (502 aa).

The chain crosses the membrane as a helical span at residues 22 to 42; it reads GNLASMLLIACAFTLSLVYLF. Cysteine 448 lines the heme pocket.

This sequence belongs to the cytochrome P450 family. The cofactor is heme. Ubiquitinated by MARCHF6, leading to proteasomal degradation.

It is found in the endoplasmic reticulum membrane. The protein localises to the microsome membrane. It carries out the reaction a 14alpha-methyl steroid + 3 reduced [NADPH--hemoprotein reductase] + 3 O2 = a Delta(14) steroid + formate + 3 oxidized [NADPH--hemoprotein reductase] + 4 H2O + 4 H(+). The enzyme catalyses lanosterol + 3 reduced [NADPH--hemoprotein reductase] + 3 O2 = 4,4-dimethyl-5alpha-cholesta-8,14,24-trien-3beta-ol + formate + 3 oxidized [NADPH--hemoprotein reductase] + 4 H2O + 4 H(+). It catalyses the reaction 24,25-dihydrolanosterol + 3 reduced [NADPH--hemoprotein reductase] + 3 O2 = 4,4-dimethyl-8,14-cholestadien-3beta-ol + formate + 3 oxidized [NADPH--hemoprotein reductase] + 4 H2O + 4 H(+). The catalysed reaction is a 14alpha-methyl steroid + reduced [NADPH--hemoprotein reductase] + O2 = a 14alpha-hydroxymethyl steroid + oxidized [NADPH--hemoprotein reductase] + H2O + H(+). It carries out the reaction a 14alpha-hydroxymethyl steroid + reduced [NADPH--hemoprotein reductase] + O2 = a 14alpha-formyl steroid + oxidized [NADPH--hemoprotein reductase] + 2 H2O + H(+). The enzyme catalyses a 14alpha-formyl steroid + reduced [NADPH--hemoprotein reductase] + O2 = a Delta(14) steroid + formate + oxidized [NADPH--hemoprotein reductase] + H2O + 2 H(+). It catalyses the reaction lanosterol + reduced [NADPH--hemoprotein reductase] + O2 = 32-hydroxylanosterol + oxidized [NADPH--hemoprotein reductase] + H2O + H(+). The catalysed reaction is 32-hydroxylanosterol + reduced [NADPH--hemoprotein reductase] + O2 = 32-oxolanosterol + oxidized [NADPH--hemoprotein reductase] + 2 H2O + H(+). It carries out the reaction 32-oxolanosterol + reduced [NADPH--hemoprotein reductase] + O2 = 4,4-dimethyl-5alpha-cholesta-8,14,24-trien-3beta-ol + formate + oxidized [NADPH--hemoprotein reductase] + H2O + 2 H(+). The enzyme catalyses 24,25-dihydrolanosterol + reduced [NADPH--hemoprotein reductase] + O2 = 32-hydroxy-24,25-dihydrolanosterol + oxidized [NADPH--hemoprotein reductase] + H2O + H(+). It catalyses the reaction 32-hydroxy-24,25-dihydrolanosterol + reduced [NADPH--hemoprotein reductase] + O2 = 32-oxo-24,25-dihydrolanosterol + oxidized [NADPH--hemoprotein reductase] + 2 H2O + H(+). The catalysed reaction is 32-oxo-24,25-dihydrolanosterol + reduced [NADPH--hemoprotein reductase] + O2 = 4,4-dimethyl-8,14-cholestadien-3beta-ol + formate + oxidized [NADPH--hemoprotein reductase] + H2O + 2 H(+). Its pathway is steroid biosynthesis; zymosterol biosynthesis; zymosterol from lanosterol: step 1/6. Inhibited by azalanstat. Inhibited by azole antifungal agents ketoconazole, itraconazole and fluconazole. In terms of biological role, sterol 14alpha-demethylase that plays a critical role in the cholesterol biosynthesis pathway, being cholesterol the major sterol component in mammalian membranes as well as a precursor for bile acid and steroid hormone synthesis. Cytochrome P450 monooxygenase that catalyzes the three-step oxidative removal of the 14alpha-methyl group (C-32) of sterols such as lanosterol (lanosta-8,24-dien-3beta-ol) and 24,25-dihydrolanosterol (DHL) in the form of formate, and converts the sterols to 4,4-dimethyl-5alpha-cholesta-8,14,24-trien-3beta-ol and 4,4-dimethyl-8,14-cholestadien-3beta-ol, respectively, which are intermediates of cholesterol biosynthesis. Can also demethylate substrates not intrinsic to mammals, such as eburicol (24-methylene-24,25-dihydrolanosterol), but at a lower rate than DHL. The polypeptide is Lanosterol 14-alpha demethylase (Bos taurus (Bovine)).